The sequence spans 460 residues: Phosphoenolpyruvate carboxylase (460 aa).

The protein belongs to the PEPCase type 2 family. As to quaternary structure, homotetramer. Requires Mg(2+) as cofactor.

The enzyme catalyses oxaloacetate + phosphate = phosphoenolpyruvate + hydrogencarbonate. Catalyzes the irreversible beta-carboxylation of phosphoenolpyruvate (PEP) to form oxaloacetate (OAA), a four-carbon dicarboxylic acid source for the tricarboxylic acid cycle. The sequence is that of Phosphoenolpyruvate carboxylase from Pyrobaculum arsenaticum (strain DSM 13514 / JCM 11321 / PZ6).